A 574-amino-acid chain; its full sequence is MEPNSQRTKVPAFLSDLGKATLRGIRKCPRCGTFNGTRGLSCKNKTCGTIFRYGARKQPSIEAVKIITGSDLQVYSVRQRDRGPDYRCFVELGVSETAIQTVDGTIITQLSSGRCYVPSCLKAATQGIVENQCQHIKLAVTCQAEATPLTLKSSVLNALQAAPETKQSLWQLATEPTGPLVQRVTKNIMVVKCKASQKHNLGYLHASFMQKISSRSLPERRFFCSCQTLRPHKSSVPKAEAAPKCIHFFACLCAFASDETLAQEFSDFLNFDASGLKEIIVPHLGCHAESSVSACESAASKPRKRKKDEVSGAQVNSSLMPQDAVNSNLRKSGLKRPVVTSSLKRHVCGQLLDEAQVTLSFQDWLASVTERIHQTMHYQFDGKPEPLVFHIPQSFFDALQQRISIGSAKKRLPNSTTAFVRKDALPLGTFSKYTWHITNILQVKQILDTPEMPLEITRSFIQNRDGTYELFKCPKVEVENIAESYGRIEKQPVLRPLELKTFLKVGNTSPDQKEPTPFIIEWIPDILPQSKIGELRIKFEYGHHRNGHVADYQDPRPPMDQPLELAPLTTITFP.

Residues Ser-297–Ser-317 are disordered.

This is an uncharacterized protein from Mus musculus (Mouse).